We begin with the raw amino-acid sequence, 182 residues long: Hypoxanthine/guanine phosphoribosyltransferase (182 aa).

It belongs to the purine/pyrimidine phosphoribosyltransferase family. Archaeal HPRT subfamily. As to quaternary structure, homodimer.

It localises to the cytoplasm. The catalysed reaction is IMP + diphosphate = hypoxanthine + 5-phospho-alpha-D-ribose 1-diphosphate. The enzyme catalyses GMP + diphosphate = guanine + 5-phospho-alpha-D-ribose 1-diphosphate. Its pathway is purine metabolism; IMP biosynthesis via salvage pathway; IMP from hypoxanthine: step 1/1. Functionally, catalyzes a salvage reaction resulting in the formation of IMP that is energically less costly than de novo synthesis. The protein is Hypoxanthine/guanine phosphoribosyltransferase of Methanosphaerula palustris (strain ATCC BAA-1556 / DSM 19958 / E1-9c).